A 242-amino-acid chain; its full sequence is Biosynthetic peptidoglycan transglycosylase (242 aa).

The chain crosses the membrane as a helical span at residues Leu-19–Val-39.

The protein belongs to the glycosyltransferase 51 family.

Its subcellular location is the cell inner membrane. It catalyses the reaction [GlcNAc-(1-&gt;4)-Mur2Ac(oyl-L-Ala-gamma-D-Glu-L-Lys-D-Ala-D-Ala)](n)-di-trans,octa-cis-undecaprenyl diphosphate + beta-D-GlcNAc-(1-&gt;4)-Mur2Ac(oyl-L-Ala-gamma-D-Glu-L-Lys-D-Ala-D-Ala)-di-trans,octa-cis-undecaprenyl diphosphate = [GlcNAc-(1-&gt;4)-Mur2Ac(oyl-L-Ala-gamma-D-Glu-L-Lys-D-Ala-D-Ala)](n+1)-di-trans,octa-cis-undecaprenyl diphosphate + di-trans,octa-cis-undecaprenyl diphosphate + H(+). It functions in the pathway cell wall biogenesis; peptidoglycan biosynthesis. Its function is as follows. Peptidoglycan polymerase that catalyzes glycan chain elongation from lipid-linked precursors. The sequence is that of Biosynthetic peptidoglycan transglycosylase from Shigella dysenteriae serotype 1 (strain Sd197).